Consider the following 416-residue polypeptide: Na(+)/H(+) antiporter NhaA (416 aa).

A run of 11 helical transmembrane segments spans residues 39–59 (GIVL…PWAA), 82–102 (LHFW…GLEI), 119–139 (LPVL…LALV), 146–166 (GWAV…ALLG), 175–195 (VFLL…IALF), 198–218 (GGLQ…VLLL), 234–254 (AVLW…GVVL), 281–301 (PWVT…VALG), 315–335 (LLMA…VLLA), 353–373 (WGGL…AIFI), and 390–410 (GVLL…WWLQ).

It belongs to the NhaA Na(+)/H(+) (TC 2.A.33) antiporter family.

It localises to the cell inner membrane. The enzyme catalyses Na(+)(in) + 2 H(+)(out) = Na(+)(out) + 2 H(+)(in). Its function is as follows. Na(+)/H(+) antiporter that extrudes sodium in exchange for external protons. The chain is Na(+)/H(+) antiporter NhaA from Acidovorax sp. (strain JS42).